A 115-amino-acid polypeptide reads, in one-letter code: Con-Ins T1A (115 aa).

A signal peptide spans 1-24 (MTTSFYFLLMALGLLLYVCQSSFG). The propeptide occupies 25 to 29 (NQHTR). Residue Pro-34 is modified to 4-hydroxyproline; partial. 3 cysteine pairs are disulfide-bonded: Cys-38-Cys-101, Cys-50-Cys-114, and Cys-100-Cys-105. At Glu-41 the chain carries 4-carboxyglutamate. The propeptide at 53 to 94 (KRNDAGKKRGRASPLWQRGGSLSMLKARAKRNEAFHLQRAHR) is c peptide. Glu-98 carries the 4-carboxyglutamate modification. Residue Pro-104 is modified to 4-hydroxyproline; partial. Glu-109 bears the 4-carboxyglutamate; partial mark. Cys-114 carries the post-translational modification Cysteine amide.

It belongs to the insulin family. In terms of assembly, heterodimer of A and B chains; disulfide-linked. As to expression, expressed by the venom gland.

It localises to the secreted. In terms of biological role, this venom insulin, from a fish-hunting cone snail, facilitates prey capture by rapidly inducing hypoglycemic shock. It is one of the smallest known insulin found in nature and lacks the C-terminal segment of the B chain that, in human insulin, mediates engagement of the insulin receptor (INSR) and assembly of the hormone's hexameric storage form. Despite lacking this segment, it both binds and activates human insulin receptor (long isoform (HIR-B)) with a high potency (EC(50)=12.0 nM). In vivo, intraperitoneal injection of this peptide into zebrafish lowers blood glucose with a lower potency than human insulin. In addition, when applied to water, this peptide reduces overall locomotor activity of zebrafish larvae, observed as a significant decrease in the percentage of time spent swimming and movement frequency. When tested on a mouse model of diabetes, this insulin also lowers blood glucose with a 10-fold lower potency than human insulin. This Conus tulipa (Fish-hunting cone snail) protein is Con-Ins T1A.